The chain runs to 342 residues: N-acetyl-gamma-glutamyl-phosphate reductase (342 aa).

C147 is an active-site residue.

This sequence belongs to the NAGSA dehydrogenase family. Type 1 subfamily.

The protein localises to the cytoplasm. The catalysed reaction is N-acetyl-L-glutamate 5-semialdehyde + phosphate + NADP(+) = N-acetyl-L-glutamyl 5-phosphate + NADPH + H(+). The protein operates within amino-acid biosynthesis; L-arginine biosynthesis; N(2)-acetyl-L-ornithine from L-glutamate: step 3/4. Its function is as follows. Catalyzes the NADPH-dependent reduction of N-acetyl-5-glutamyl phosphate to yield N-acetyl-L-glutamate 5-semialdehyde. This Campylobacter jejuni subsp. jejuni serotype O:6 (strain 81116 / NCTC 11828) protein is N-acetyl-gamma-glutamyl-phosphate reductase.